A 660-amino-acid polypeptide reads, in one-letter code: Phosphatidylinositol-binding clathrin assembly protein (660 aa).

S2 carries the N-acetylserine modification. The region spanning 14 to 145 (QHSVTGSAVS…VSYRQVAFDF (132 aa)) is the ENTH domain. A phosphoserine mark is found at S16 and S20. Residues 221–294 (KYFDMKKNQC…LEGKKIKDST (74 aa)) are interaction with PIMREG. K238 participates in a covalent cross-link: Glycyl lysine isopeptide (Lys-Gly) (interchain with G-Cter in SUMO2). Residues S303 and S315 each carry the phosphoserine modification. Positions 556–566 (GTTKNDVSWSQ) are enriched in polar residues. Residues 556–580 (GTTKNDVSWSQPGEKKLTGGSNWQP) form a disordered region.

The protein belongs to the PICALM/SNAP91 family. As to quaternary structure, binds to clathrin; involves primarily the C-terminal sequences, but the full-length protein is required for full binding capacity. Binds phosphatidylinositol 4,5- bisphosphate. Interacts with PIMREG; this interaction may change the subcellular location into the nucleus. Interacts with AP2A1 (via its alpha-appendage domain). Interacts (via N-terminus) with VAMP2; VAMP3; VAMP7 and VAMP8 (Via N-terminus). Interacts with LC3/MAP1LC3A. Skins and livers of 1-week-old mice.

It localises to the cell membrane. The protein localises to the membrane. It is found in the clathrin-coated pit. Its subcellular location is the golgi apparatus. The protein resides in the cytoplasmic vesicle. It localises to the clathrin-coated vesicle. The protein localises to the nucleus. Its function is as follows. Cytoplasmic adapter protein that plays a critical role in clathrin-mediated endocytosis which is important in processes such as internalization of cell receptors, synaptic transmission or removal of apoptotic cells. Recruits AP-2 and attaches clathrin triskelions to the cytoplasmic side of plasma membrane leading to clathrin-coated vesicles (CCVs) assembly. Furthermore, regulates clathrin-coated vesicle size and maturation by directly sensing and driving membrane curvature. In addition to binding to clathrin, mediates the endocytosis of small R-SNARES (Soluble NSF Attachment Protein REceptors) between plasma membranes and endosomes including VAMP2, VAMP3, VAMP4, VAMP7 or VAMP8. In turn, PICALM-dependent SNARE endocytosis is required for the formation and maturation of autophagic precursors. Modulates thereby autophagy and the turnover of autophagy substrates such as MAPT/TAU or amyloid precursor protein cleaved C-terminal fragment (APP-CTF). The chain is Phosphatidylinositol-binding clathrin assembly protein (Picalm) from Mus musculus (Mouse).